A 240-amino-acid polypeptide reads, in one-letter code: Ribosomal RNA small subunit methyltransferase J (240 aa).

S-adenosyl-L-methionine contacts are provided by residues 93 to 94 and D162; that span reads RD.

It belongs to the methyltransferase superfamily. RsmJ family.

Its subcellular location is the cytoplasm. The enzyme catalyses guanosine(1516) in 16S rRNA + S-adenosyl-L-methionine = N(2)-methylguanosine(1516) in 16S rRNA + S-adenosyl-L-homocysteine + H(+). Specifically methylates the guanosine in position 1516 of 16S rRNA. The polypeptide is Ribosomal RNA small subunit methyltransferase J (Francisella philomiragia subsp. philomiragia (strain ATCC 25017 / CCUG 19701 / FSC 153 / O#319-036)).